The primary structure comprises 886 residues: Chitin synthase 3 (886 aa).

Disordered stretches follow at residues 1–70 (MQQG…YQTD) and 86–138 (PYEP…AGGG). Residues 7–17 (LDDRPYGRPEQ) show a composition bias toward basic and acidic residues. Positions 37 to 56 (PSDQLQLNAAQSVDNLSRNS) are enriched in polar residues. Asn51 carries an N-linked (GlcNAc...) asparagine glycan. Over residues 106–122 (YDHDDLRPMLPHQDSHA) the composition is skewed to basic and acidic residues. Asn196 carries an N-linked (GlcNAc...) asparagine glycan. 7 helical membrane-spanning segments follow: residues 428–448 (SAFG…YVAL), 526–546 (RWLN…YQFF), 556–576 (VMLF…WFAV), 602–622 (ILGV…FVLS), 637–657 (MVYF…FIAV), 683–703 (TLIV…FLMF), and 712–732 (FVQY…YAFC). The disordered stretch occupies residues 745–768 (DQAEKLPSVSTKDGSGKTDLPDES). Helical transmembrane passes span 813 to 833 (VLAW…AAGL) and 858 to 878 (VVLW…MWFL).

This sequence belongs to the chitin synthase family. Class I subfamily.

It is found in the cell membrane. It carries out the reaction [(1-&gt;4)-N-acetyl-beta-D-glucosaminyl](n) + UDP-N-acetyl-alpha-D-glucosamine = [(1-&gt;4)-N-acetyl-beta-D-glucosaminyl](n+1) + UDP + H(+). Its function is as follows. Polymerizes chitin, a structural polymer of the cell wall and septum, by transferring the sugar moiety of UDP-GlcNAc to the non-reducing end of the growing chitin polymer. Involved in tolerance to hyperosmotic conditions. CHS3 is the only V.dahliae chitin synthase that is not involved in virulence. The chain is Chitin synthase 3 from Verticillium dahliae (strain VdLs.17 / ATCC MYA-4575 / FGSC 10137) (Verticillium wilt).